A 503-amino-acid polypeptide reads, in one-letter code: Maturase K (503 aa).

It belongs to the intron maturase 2 family. MatK subfamily.

The protein localises to the plastid. The protein resides in the chloroplast. Its function is as follows. Usually encoded in the trnK tRNA gene intron. Probably assists in splicing its own and other chloroplast group II introns. The polypeptide is Maturase K (Kunzea pulchella (Red kunzea)).